Reading from the N-terminus, the 245-residue chain is 1-(5-phosphoribosyl)-5-[(5-phosphoribosylamino)methylideneamino] imidazole-4-carboxamide isomerase (245 aa).

Asp-8 acts as the Proton acceptor in catalysis. The active-site Proton donor is Asp-130.

This sequence belongs to the HisA/HisF family.

Its subcellular location is the cytoplasm. It catalyses the reaction 1-(5-phospho-beta-D-ribosyl)-5-[(5-phospho-beta-D-ribosylamino)methylideneamino]imidazole-4-carboxamide = 5-[(5-phospho-1-deoxy-D-ribulos-1-ylimino)methylamino]-1-(5-phospho-beta-D-ribosyl)imidazole-4-carboxamide. It functions in the pathway amino-acid biosynthesis; L-histidine biosynthesis; L-histidine from 5-phospho-alpha-D-ribose 1-diphosphate: step 4/9. In Pseudomonas savastanoi pv. phaseolicola (strain 1448A / Race 6) (Pseudomonas syringae pv. phaseolicola (strain 1448A / Race 6)), this protein is 1-(5-phosphoribosyl)-5-[(5-phosphoribosylamino)methylideneamino] imidazole-4-carboxamide isomerase.